Here is an 855-residue protein sequence, read N- to C-terminus: Mitochondrial 15S rRNA processing factor CCM1 (855 aa).

The tract at residues 29 to 61 is disordered; that stretch reads PTAMRTRRRTRRHEREPNLRKRQGGSHSNLKEN. PPR repeat units lie at residues 234-265, 317-351, and 354-388; these read DVDM…MKKL, NKVN…SLSH, and DVAT…KMEP.

This sequence belongs to the CCM1 family. As to quaternary structure, binds to mitochondrial small subunit 15S rRNA.

It localises to the mitochondrion. Functionally, regulates mitochondrial small subunit maturation by controlling 15S rRNA 5'-end processing. Localizes to the 5' precursor of the 15S rRNA in a position that is subsequently occupied by mS47 in the mature yeast mtSSU. Uses structure and sequence-specific RNA recognition, binding to a single-stranded region of the precursor and specifically recognizing bases -6 to -1. The exchange of Ccm1 for mS47 is coupled to the irreversible removal of precursor rRNA that is accompanied by conformational changes of the mitoribosomal proteins uS5m and mS26. These conformational changes signal completion of 5'-end rRNA processing through protection of the mature 5'-end of the 15S rRNA and stabilization of mS47. The removal of the 5' precursor together with the dissociation of Ccm1 may be catalyzed by the 5'-3' exoribonuclease Pet127. Involved in the specific removal of group I introns in mitochondrial encoded transcripts. In Eremothecium gossypii (strain ATCC 10895 / CBS 109.51 / FGSC 9923 / NRRL Y-1056) (Yeast), this protein is Mitochondrial 15S rRNA processing factor CCM1 (CCM1).